A 410-amino-acid polypeptide reads, in one-letter code: Transcription factor E2F4 (410 aa).

The segment at 1–20 is disordered; sequence MAEAGPQAPPPPGTPSRHEK. The residue at position 2 (Ala2) is an N-acetylalanine. Residues 16–85 mediate DNA binding; sequence SRHEKSLGLL…KNSIQWKGVG (70 aa). The segment at 43–65 is leucine-zipper; the sequence is LKLAADTLAVRQKRRIYDITNVL. The DEF box signature appears at 48-85; sequence DTLAVRQKRRIYDITNVLEGIGLIEKKSKNSIQWKGVG. The segment at 86–181 is dimerization; it reads PGCNTREIAD…GLNGQKKYQI (96 aa). 2 disordered regions span residues 203–258 and 303–341; these read PPVA…GSTQ and SALL…DPTG. Composition is skewed to low complexity over residues 231 to 252 and 308 to 324; these read PALA…TPTP and SSSS…SSSS. The transactivation stretch occupies residues 334–410; the sequence is PIKADPTGVL…DLFDVPVLKL (77 aa). A Phosphoserine modification is found at Ser381. Positions 386–389 match the HCFC1-binding-motif (HBM) motif; that stretch reads DHDY. Residues 387–404 are interaction with RBL1 and RBL2; the sequence is HDYIYNLDESEGVCDLFD.

The protein belongs to the E2F/DP family. Component of the DRTF1/E2F transcription factor complex. Binds cooperatively with TFDP1/Dp-1 to E2F sites. The E2F4/TFDP1 dimer interacts preferentially with pocket protein RBL1, which inhibits the E2F transactivation domain. Lower affinity interaction has been found with retinoblastoma protein RB1. Interacts with TRRAP, which probably mediates its interaction with histone acetyltransferase complexes, leading to transcription activation. Interacts with HCFC1. Component of the DREAM complex (also named LINC complex) at least composed of E2F4, E2F5, LIN9, LIN37, LIN52, LIN54, MYBL1, MYBL2, RBL1, RBL2, RBBP4, TFDP1 and TFDP2. The complex exists in quiescent cells where it represses cell cycle-dependent genes. It dissociates in S phase when LIN9, LIN37, LIN52 and LIN54 form a subcomplex that binds to MYBL2. Interacts with PML. Interacts with CEBPA (when phosphorylated). Differentially phosphorylated in vivo.

Its subcellular location is the nucleus. Functionally, transcription activator that binds DNA cooperatively with DP proteins through the E2 recognition site, 5'-TTTC[CG]CGC-3' found in the promoter region of a number of genes whose products are involved in cell cycle regulation or in DNA replication. The DRTF1/E2F complex functions in the control of cell-cycle progression from G1 to S phase. E2F4 binds with high affinity to RBL1 and RBL2. In some instances can also bind RB1. Specifically required for multiciliate cell differentiation: together with MCIDAS and E2F5, binds and activate genes required for centriole biogenesis. In Mus musculus (Mouse), this protein is Transcription factor E2F4 (E2f4).